The following is a 298-amino-acid chain: MALDFLAGCAGGVAGVLVGHPFDTVKVRLQVQSVEKPQYRGTLHCFQAIIKQESVLGLYRGLGSPLLGLTFINALVFGVQGNTLRALGRDSPLNQFLAGAAAGAIQCVICCPMELAKTRLQLQEAGPARTYRGPLDCLAQIYRQEGLRGVNRGMVSTLLRETPSFGVYFLTYDVLTRALGCEPGDRLLVPKLLLAGGTSGIASWLSTYPVDVVKSRLQADGLQGAPRYRGIVDCVQQSYREEGWRVFTRGLASTLLRAFPVNAATFATVTVVLSYARGEEARLEGDAGSAALAQPSSL.

Transmembrane regions (helical) follow at residues 2–22 (ALDF…GHPF), 61–81 (GLGS…GVQG), 96–116 (FLAG…MELA), 153–172 (GMVS…FLTY), 187–207 (LLVP…WLST), and 255–275 (LLRA…VLSY). 3 Solcar repeats span residues 2–86 (ALDF…TLRA), 90–178 (DSPL…LTRA), and 185–275 (DRLL…VLSY).

The protein belongs to the mitochondrial carrier (TC 2.A.29) family.

It localises to the mitochondrion inner membrane. The catalysed reaction is L-lysine(out) + L-arginine(in) = L-lysine(in) + L-arginine(out). It catalyses the reaction L-histidine(out) + L-arginine(in) = L-histidine(in) + L-arginine(out). It carries out the reaction L-ornithine(in) + L-arginine(out) = L-ornithine(out) + L-arginine(in). The enzyme catalyses L-homoarginine(in) + L-arginine(out) = L-homoarginine(out) + L-arginine(in). The catalysed reaction is N(omega)-methyl-L-arginine(in) + L-arginine(out) = N(omega)-methyl-L-arginine(out) + L-arginine(in). It catalyses the reaction L-arginine(in) = L-arginine(out). It carries out the reaction L-lysine(in) = L-lysine(out). The enzyme catalyses L-ornithine(in) = L-ornithine(out). The catalysed reaction is L-histidine(out) = L-histidine(in). In terms of biological role, mitochondrial transporter of arginine, lysine, homoarginine, methylarginine and, to a much lesser extent, ornithine and histidine. Does not transport carnitine nor acylcarnitines. Functions by both counter-exchange and uniport mechanisms. Plays a physiological role in the import of basic amino acids into mitochondria for mitochondrial protein synthesis and amino acid degradation. This is Mitochondrial basic amino acids transporter (SLC25A29) from Bos taurus (Bovine).